The primary structure comprises 775 residues: Lon protease (775 aa).

Residues 6 to 207 form the Lon N-terminal domain; it reads LPLMALRDIV…TIINILTSNI (202 aa). 356 to 363 contributes to the ATP binding site; sequence GPPGVGKT. The region spanning 592 to 773 is the Lon proteolytic domain; sequence NDQIGSTTGL…DQVLEHALTK (182 aa). Active-site residues include S679 and K722.

This sequence belongs to the peptidase S16 family. In terms of assembly, homohexamer. Organized in a ring with a central cavity.

The protein resides in the cytoplasm. It carries out the reaction Hydrolysis of proteins in presence of ATP.. ATP-dependent serine protease that mediates the selective degradation of mutant and abnormal proteins as well as certain short-lived regulatory proteins. Required for cellular homeostasis and for survival from DNA damage and developmental changes induced by stress. Degrades polypeptides processively to yield small peptide fragments that are 5 to 10 amino acids long. Binds to DNA in a double-stranded, site-specific manner. The chain is Lon protease from Rickettsia bellii (strain RML369-C).